We begin with the raw amino-acid sequence, 92 residues long: PqqA binding protein (92 aa).

The protein belongs to the PqqD family. Monomer. Interacts with PqqE.

Its pathway is cofactor biosynthesis; pyrroloquinoline quinone biosynthesis. Its function is as follows. Functions as a PqqA binding protein and presents PqqA to PqqE, in the pyrroloquinoline quinone (PQQ) biosynthetic pathway. This Xanthomonas oryzae pv. oryzae (strain MAFF 311018) protein is PqqA binding protein.